The following is a 203-amino-acid chain: uncharacterized protein (203 aa).

Residues histidine 34, glutamate 97, and histidine 172 each coordinate Fe cation.

It belongs to the hemerythrin family.

The protein resides in the mitochondrion. This is an uncharacterized protein from Schizosaccharomyces pombe (strain 972 / ATCC 24843) (Fission yeast).